Consider the following 39-residue polypeptide: Large ribosomal subunit protein bL36 (39 aa).

It belongs to the bacterial ribosomal protein bL36 family.

In Leuconostoc mesenteroides subsp. mesenteroides (strain ATCC 8293 / DSM 20343 / BCRC 11652 / CCM 1803 / JCM 6124 / NCDO 523 / NBRC 100496 / NCIMB 8023 / NCTC 12954 / NRRL B-1118 / 37Y), this protein is Large ribosomal subunit protein bL36.